Reading from the N-terminus, the 657-residue chain is Putative serine protease (657 aa).

3 helical membrane passes run 4 to 24 (YLATSVRLCLMVCIVGWLLMP), 46 to 62 (WLLTGLSTWFCIVPSGT), and 109 to 131 (LLSGVTFSVVLWYPRILVTVLML). Residues 239 to 434 (QPGSDFVECE…ETDRYARTME (196 aa)) enclose the Peptidase S39 domain. Residues His-284, Asp-318, and Ser-386 each act as for protease activity in the active site. The interval 513 to 605 (PLGGLPISNG…PPSTGSVPKS (93 aa)) is disordered. Residues 548–559 (HTRRRRRNKKKS) are compositionally biased toward basic residues. Basic and acidic residues predominate over residues 560 to 569 (KNSETGHGPE). The segment covering 571–589 (QSQQQSRPSSPIPDDSAPV) has biased composition (low complexity).

This sequence belongs to the peptidase S39B family.

The protein resides in the host membrane. Functionally, putative serine protease. This chain is Putative serine protease, found in Mushroom bacilliform virus (isolate Australia/AUS LF-1) (MBV).